A 179-amino-acid polypeptide reads, in one-letter code: Large ribosomal subunit protein uL5 (179 aa).

Belongs to the universal ribosomal protein uL5 family. Part of the 50S ribosomal subunit; part of the 5S rRNA/L5/L18/L25 subcomplex. Contacts the 5S rRNA and the P site tRNA. Forms a bridge to the 30S subunit in the 70S ribosome.

This is one of the proteins that bind and probably mediate the attachment of the 5S RNA into the large ribosomal subunit, where it forms part of the central protuberance. In the 70S ribosome it contacts protein S13 of the 30S subunit (bridge B1b), connecting the 2 subunits; this bridge is implicated in subunit movement. Contacts the P site tRNA; the 5S rRNA and some of its associated proteins might help stabilize positioning of ribosome-bound tRNAs. In Desulforapulum autotrophicum (strain ATCC 43914 / DSM 3382 / VKM B-1955 / HRM2) (Desulfobacterium autotrophicum), this protein is Large ribosomal subunit protein uL5.